A 215-amino-acid chain; its full sequence is Recombination protein RecR (215 aa).

The C4-type zinc-finger motif lies at 74-89; it reads CQRCGHLSADPICDIC. One can recognise a Toprim domain in the interval 97-191; it reads GVICVVADSR…RVTRIAYGLP (95 aa).

Belongs to the RecR family.

Functionally, may play a role in DNA repair. It seems to be involved in an RecBC-independent recombinational process of DNA repair. It may act with RecF and RecO. The chain is Recombination protein RecR from Synechococcus sp. (strain RCC307).